Here is a 270-residue protein sequence, read N- to C-terminus: Putative pyruvate, phosphate dikinase regulatory protein (270 aa).

G148–T155 is an ADP binding site.

Belongs to the pyruvate, phosphate/water dikinase regulatory protein family. PDRP subfamily.

It carries out the reaction N(tele)-phospho-L-histidyl/L-threonyl-[pyruvate, phosphate dikinase] + ADP = N(tele)-phospho-L-histidyl/O-phospho-L-threonyl-[pyruvate, phosphate dikinase] + AMP + H(+). The enzyme catalyses N(tele)-phospho-L-histidyl/O-phospho-L-threonyl-[pyruvate, phosphate dikinase] + phosphate + H(+) = N(tele)-phospho-L-histidyl/L-threonyl-[pyruvate, phosphate dikinase] + diphosphate. Functionally, bifunctional serine/threonine kinase and phosphorylase involved in the regulation of the pyruvate, phosphate dikinase (PPDK) by catalyzing its phosphorylation/dephosphorylation. The sequence is that of Putative pyruvate, phosphate dikinase regulatory protein from Bacillus cereus (strain AH187).